Here is a 228-residue protein sequence, read N- to C-terminus: Cytochrome c oxidase subunit 2 (228 aa).

The Mitochondrial intermembrane segment spans residues 1-26; that stretch reads MATWANLGLQDSSSPLMEQLNFFHDH. Residues 27-47 form a helical membrane-spanning segment; the sequence is TLLILTMITILVGYIMGMLMF. At 48 to 60 the chain is on the mitochondrial matrix side; sequence NQFTNRYLLHGQT. Residues 61–81 form a helical membrane-spanning segment; that stretch reads IEIIWTVLPAIILMFIALPSL. At 82–228 the chain is on the mitochondrial intermembrane side; sequence RLLYLMDEIN…FIKWITNMTN (147 aa). Residues H161, C196, E198, C200, H204, and M207 each contribute to the Cu cation site. E198 contributes to the Mg(2+) binding site.

It belongs to the cytochrome c oxidase subunit 2 family. As to quaternary structure, component of the cytochrome c oxidase (complex IV, CIV), a multisubunit enzyme composed of a catalytic core of 3 subunits and several supernumerary subunits. The complex exists as a monomer or a dimer and forms supercomplexes (SCs) in the inner mitochondrial membrane with ubiquinol-cytochrome c oxidoreductase (cytochrome b-c1 complex, complex III, CIII). Requires Cu cation as cofactor.

It localises to the mitochondrion inner membrane. It carries out the reaction 4 Fe(II)-[cytochrome c] + O2 + 8 H(+)(in) = 4 Fe(III)-[cytochrome c] + 2 H2O + 4 H(+)(out). Component of the cytochrome c oxidase, the last enzyme in the mitochondrial electron transport chain which drives oxidative phosphorylation. The respiratory chain contains 3 multisubunit complexes succinate dehydrogenase (complex II, CII), ubiquinol-cytochrome c oxidoreductase (cytochrome b-c1 complex, complex III, CIII) and cytochrome c oxidase (complex IV, CIV), that cooperate to transfer electrons derived from NADH and succinate to molecular oxygen, creating an electrochemical gradient over the inner membrane that drives transmembrane transport and the ATP synthase. Cytochrome c oxidase is the component of the respiratory chain that catalyzes the reduction of oxygen to water. Electrons originating from reduced cytochrome c in the intermembrane space (IMS) are transferred via the dinuclear copper A center (CU(A)) of subunit 2 and heme A of subunit 1 to the active site in subunit 1, a binuclear center (BNC) formed by heme A3 and copper B (CU(B)). The BNC reduces molecular oxygen to 2 water molecules using 4 electrons from cytochrome c in the IMS and 4 protons from the mitochondrial matrix. This chain is Cytochrome c oxidase subunit 2 (COXII), found in Anopheles quadrimaculatus (Common malaria mosquito).